A 64-amino-acid polypeptide reads, in one-letter code: Putative antitoxin VapB51 (64 aa).

In terms of biological role, possibly the antitoxin component of a type II toxin-antitoxin (TA) system. Its cognate toxin is VapC51. This Mycobacterium tuberculosis (strain ATCC 25618 / H37Rv) protein is Putative antitoxin VapB51.